The primary structure comprises 403 residues: Argininosuccinate synthase (403 aa).

Residues 13–21 (AYSGGLDTS) and Ala40 each bind ATP. The L-citrulline site is built by Tyr92 and Ser97. Position 122 (Gly122) interacts with ATP. Positions 124, 128, and 129 each coordinate L-aspartate. Asn128 contributes to the L-citrulline binding site. Arg132, Ser181, Ser190, Glu266, and Tyr278 together coordinate L-citrulline.

Belongs to the argininosuccinate synthase family. Type 1 subfamily. Homotetramer.

The protein resides in the cytoplasm. It catalyses the reaction L-citrulline + L-aspartate + ATP = 2-(N(omega)-L-arginino)succinate + AMP + diphosphate + H(+). It participates in amino-acid biosynthesis; L-arginine biosynthesis; L-arginine from L-ornithine and carbamoyl phosphate: step 2/3. In Aliivibrio fischeri (strain MJ11) (Vibrio fischeri), this protein is Argininosuccinate synthase.